Here is an 84-residue protein sequence, read N- to C-terminus: uncharacterized protein (84 aa).

Residues 8 to 47 (CECCDRDLPPDSGDAMICTFECTFCAGCAETKLGGTCPNC) form a cysteine motif region.

This is an uncharacterized protein from Rhizobium meliloti (strain 1021) (Ensifer meliloti).